The sequence spans 852 residues: Mannosyl-oligosaccharide glucosidase GCS1 (852 aa).

The disordered stretch occupies residues 1–31; the sequence is MTGASRRSARGRIKSSSLSPGSDEGSAYPPS. The Cytoplasmic segment spans residues 1 to 51; that stretch reads MTGASRRSARGRIKSSSLSPGSDEGSAYPPSIRRGKGKELVSIGAFKTNLK. The short motif at 6 to 12 is the Endoplasmic reticulum targeting element; it reads RRSARGR. The span at 15-26 shows a compositional bias: low complexity; the sequence is SSSLSPGSDEGS. Residues 52 to 72 traverse the membrane as a helical; Signal-anchor for type II membrane protein segment; it reads ILVGLIILGIIVIYFVINRLV. The Lumenal segment spans residues 73-852; it reads RHGLLFDESQ…LIMSEDYPIF (780 aa). The required for endoplasmic reticulum targeting stretch occupies residues 91–150; that stretch reads PAPKVMDLSMFQGEHKESLYWGTYRPHVYFGVRARTPLSLVAGLMWLGVKDEMYVMRHFC. Residues asparagine 282, asparagine 552, and asparagine 570 are each glycosylated (N-linked (GlcNAc...) asparagine). The segment covering 574–583 has biased composition (polar residues); sequence QELNPKTLSS. The segment at 574–593 is disordered; the sequence is QELNPKTLSSGLDDYPRASH. Aspartate 586 acts as the Proton donor in catalysis. Asparagine 633, asparagine 662, and asparagine 730 each carry an N-linked (GlcNAc...) asparagine glycan. The Proton acceptor role is filled by glutamate 819.

This sequence belongs to the glycosyl hydrolase 63 family. As to expression, constitutively expressed in roots, stems, leaves, flowers and siliques.

The protein resides in the endoplasmic reticulum membrane. The enzyme catalyses N(4)-(alpha-D-Glc-(1-&gt;2)-alpha-D-Glc-(1-&gt;3)-alpha-D-Glc-(1-&gt;3)-alpha-D-Man-(1-&gt;2)-alpha-D-Man-(1-&gt;2)-alpha-D-Man-(1-&gt;3)-[alpha-D-Man-(1-&gt;2)-alpha-D-Man-(1-&gt;3)-[alpha-D-Man-(1-&gt;2)-alpha-D-Man-(1-&gt;6)]-alpha-D-Man-(1-&gt;6)]-beta-D-Man-(1-&gt;4)-beta-D-GlcNAc-(1-&gt;4)-beta-D-GlcNAc)-L-asparaginyl-[protein] + H2O = N(4)-(alpha-D-Glc-(1-&gt;3)-alpha-D-Glc-(1-&gt;3)-alpha-D-Man-(1-&gt;2)-alpha-D-Man-(1-&gt;2)-alpha-D-Man-(1-&gt;3)-[alpha-D-Man-(1-&gt;2)-alpha-D-Man-(1-&gt;3)-[alpha-D-Man-(1-&gt;2)-alpha-D-Man-(1-&gt;6)]-alpha-D-Man-(1-&gt;6)]-beta-D-Man-(1-&gt;4)-beta-D-GlcNAc-(1-&gt;4)-beta-D-GlcNAc)-L-asparaginyl-[protein] + beta-D-glucose. It participates in glycan metabolism; N-glycan degradation. Functionally, cleaves the distal alpha 1,2-linked glucose residue from the Glc(3)Man(9)GlcNAc(2) oligosaccharide precursor. Required for the accumulation of seed storage proteins, the formation of protein bodies, cell differentiation, cellulose biosynthesis and organization (in cell walls), cell shape determination and organization (e.g. epidermal cells), and embryo development. Involved in root development. The polypeptide is Mannosyl-oligosaccharide glucosidase GCS1 (GCS1) (Arabidopsis thaliana (Mouse-ear cress)).